The primary structure comprises 425 residues: Enolase (425 aa).

Gln-162 lines the (2R)-2-phosphoglycerate pocket. The active-site Proton donor is the Glu-204. Positions 241, 282, and 309 each coordinate Mg(2+). (2R)-2-phosphoglycerate is bound by residues Lys-334, Arg-363, Ser-364, and Lys-385. The active-site Proton acceptor is the Lys-334.

The protein belongs to the enolase family. Mg(2+) serves as cofactor.

The protein resides in the cytoplasm. Its subcellular location is the secreted. It localises to the cell surface. The catalysed reaction is (2R)-2-phosphoglycerate = phosphoenolpyruvate + H2O. It functions in the pathway carbohydrate degradation; glycolysis; pyruvate from D-glyceraldehyde 3-phosphate: step 4/5. Its function is as follows. Catalyzes the reversible conversion of 2-phosphoglycerate (2-PG) into phosphoenolpyruvate (PEP). It is essential for the degradation of carbohydrates via glycolysis. This chain is Enolase, found in Corynebacterium diphtheriae (strain ATCC 700971 / NCTC 13129 / Biotype gravis).